The following is a 143-amino-acid chain: Large ribosomal subunit protein uL13 (143 aa).

The protein belongs to the universal ribosomal protein uL13 family. In terms of assembly, part of the 50S ribosomal subunit.

Functionally, this protein is one of the early assembly proteins of the 50S ribosomal subunit, although it is not seen to bind rRNA by itself. It is important during the early stages of 50S assembly. The chain is Large ribosomal subunit protein uL13 from Methanosarcina acetivorans (strain ATCC 35395 / DSM 2834 / JCM 12185 / C2A).